We begin with the raw amino-acid sequence, 411 residues long: L-cysteine:1D-myo-inositol 2-amino-2-deoxy-alpha-D-glucopyranoside ligase (411 aa).

Residue Cys43 participates in Zn(2+) binding. L-cysteinyl-5'-AMP is bound by residues 43-46 (CGIT), Thr58, and 81-83 (NVT). Residues 45–55 (ITPYDATHLGH) carry the 'HIGH' region motif. A 'ERGGDP' region motif is present at residues 186 to 191 (QRGGDP). Trp226 lines the L-cysteinyl-5'-AMP pocket. Zn(2+) is bound at residue Cys230. Position 248 to 250 (248 to 250 (GSD)) interacts with L-cysteinyl-5'-AMP. His255 contributes to the Zn(2+) binding site. Ile282 provides a ligand contact to L-cysteinyl-5'-AMP. Residues 288–292 (KMSKS) carry the 'KMSKS' region motif.

The protein belongs to the class-I aminoacyl-tRNA synthetase family. MshC subfamily. As to quaternary structure, monomer. Zn(2+) is required as a cofactor.

The catalysed reaction is 1D-myo-inositol 2-amino-2-deoxy-alpha-D-glucopyranoside + L-cysteine + ATP = 1D-myo-inositol 2-(L-cysteinylamino)-2-deoxy-alpha-D-glucopyranoside + AMP + diphosphate + H(+). Functionally, catalyzes the ATP-dependent condensation of GlcN-Ins and L-cysteine to form L-Cys-GlcN-Ins. The polypeptide is L-cysteine:1D-myo-inositol 2-amino-2-deoxy-alpha-D-glucopyranoside ligase (Mycobacterium marinum (strain ATCC BAA-535 / M)).